The chain runs to 100 residues: Toxin ParE3 (100 aa).

This sequence belongs to the RelE toxin family.

In terms of biological role, toxic component of a type II toxin-antitoxin (TA) system. Its toxic effect is neutralized by coexpression with cognate antitoxin ParD3 but no other ParD or RelB antitoxin. This is Toxin ParE3 (parE3) from Caulobacter vibrioides (strain ATCC 19089 / CIP 103742 / CB 15) (Caulobacter crescentus).